The chain runs to 242 residues: Proteasome subunit alpha (242 aa).

This sequence belongs to the peptidase T1A family. The 20S proteasome core is composed of 14 alpha and 14 beta subunits that assemble into four stacked heptameric rings, resulting in a barrel-shaped structure. The two inner rings, each composed of seven catalytic beta subunits, are sandwiched by two outer rings, each composed of seven alpha subunits. The catalytic chamber with the active sites is on the inside of the barrel. Has a gated structure, the ends of the cylinder being occluded by the N-termini of the alpha-subunits. Is capped by the proteasome-associated ATPase, ARC.

The protein resides in the cytoplasm. It participates in protein degradation; proteasomal Pup-dependent pathway. Its activity is regulated as follows. The formation of the proteasomal ATPase ARC-20S proteasome complex, likely via the docking of the C-termini of ARC into the intersubunit pockets in the alpha-rings, may trigger opening of the gate for substrate entry. Interconversion between the open-gate and close-gate conformations leads to a dynamic regulation of the 20S proteasome proteolysis activity. Its function is as follows. Component of the proteasome core, a large protease complex with broad specificity involved in protein degradation. This Renibacterium salmoninarum (strain ATCC 33209 / DSM 20767 / JCM 11484 / NBRC 15589 / NCIMB 2235) protein is Proteasome subunit alpha.